Consider the following 129-residue polypeptide: Small ribosomal subunit protein uS11 (129 aa).

It belongs to the universal ribosomal protein uS11 family. In terms of assembly, part of the 30S ribosomal subunit. Interacts with proteins S7 and S18. Binds to IF-3.

In terms of biological role, located on the platform of the 30S subunit, it bridges several disparate RNA helices of the 16S rRNA. Forms part of the Shine-Dalgarno cleft in the 70S ribosome. The chain is Small ribosomal subunit protein uS11 from Sinorhizobium medicae (strain WSM419) (Ensifer medicae).